Consider the following 449-residue polypeptide: Deoxyguanosinetriphosphate triphosphohydrolase-like protein (449 aa).

Residues 1 to 27 (MTSSVWQERRHGEDKQRRNDHRSPYQR) form a disordered region. Residues 7–27 (QERRHGEDKQRRNDHRSPYQR) show a composition bias toward basic and acidic residues. The HD domain occupies 59-255 (RLTHSLEVSQ…MELADDIAYA (197 aa)).

This sequence belongs to the dGTPase family. Type 2 subfamily.

The protein is Deoxyguanosinetriphosphate triphosphohydrolase-like protein of Shewanella baltica (strain OS185).